A 434-amino-acid chain; its full sequence is Nicotinate phosphoribosyltransferase (434 aa).

H242 is modified (phosphohistidine; by autocatalysis).

It belongs to the NAPRTase family. Post-translationally, transiently phosphorylated on a His residue during the reaction cycle. Phosphorylation strongly increases the affinity for substrates and increases the rate of nicotinate D-ribonucleotide production. Dephosphorylation regenerates the low-affinity form of the enzyme, leading to product release.

The enzyme catalyses nicotinate + 5-phospho-alpha-D-ribose 1-diphosphate + ATP + H2O = nicotinate beta-D-ribonucleotide + ADP + phosphate + diphosphate. It functions in the pathway cofactor biosynthesis; NAD(+) biosynthesis; nicotinate D-ribonucleotide from nicotinate: step 1/1. Functionally, catalyzes the synthesis of beta-nicotinate D-ribonucleotide from nicotinate and 5-phospho-D-ribose 1-phosphate at the expense of ATP. The chain is Nicotinate phosphoribosyltransferase from Rhizobium leguminosarum bv. trifolii (strain WSM2304).